A 313-amino-acid chain; its full sequence is MGCRCCKMIQSYLFDPVQVPSPGFVNEVNNCKLEEDDTVRLKGTQNSEVEVPGSTLHSGSLSKPDSSGSTTGLPCQGSLTQEDSEERPCVEKHGIVNGIRPTATLQSVRSPRPQQVDSVSWASSPWVATIDSAHPAQPFLEGEDYRKQSCMLPTLEGTQMVGHGDSRAPAEALAVADHIPYIPAPDYPQVWSPEVDNVNPEEKDCLFENHSEVEPLPGIHPRVSQQGLSMPFSLKRSWDSLNEAGTTEVLSVYFKEEDPTQPTPVADPGNEREDPHTYNGNKEGAVVDEDAEVAEALAALEAATAGEDADDAD.

The tract at residues 42 to 95 (KGTQNSEVEVPGSTLHSGSLSKPDSSGSTTGLPCQGSLTQEDSEERPCVEKHGI) is disordered. Over residues 58-69 (SGSLSKPDSSGS) the composition is skewed to low complexity. Serine 60 is modified (phosphoserine). Positions 70 to 81 (TTGLPCQGSLTQ) are enriched in polar residues. Threonine 104 carries the phosphothreonine modification. A phosphoserine mark is found at serine 107, serine 237, and serine 240. Positions 253–288 (YFKEEDPTQPTPVADPGNEREDPHTYNGNKEGAVVD) are disordered.

Interacts with KEAP1; this interaction prevents the ubiquitination of KEAP1 by TRIM25, thus protecting KEAP1 from degradation. Found in association with PDCD10 and members of the STE20 kinases, such as STK24, STK25, and STK26.

The protein localises to the cell membrane. Functionally, acts as a tumor suppressor. Acts as a tumor suppressor for colorectal cancer cell proliferation by targeting KEAP1/USP17/ELK1/CDK6 axis. The polypeptide is PDCD10 and GCKIII kinases-associated protein 1 (Rattus norvegicus (Rat)).